The primary structure comprises 331 residues: Small ribosomal subunit protein uS2 (331 aa).

Belongs to the universal ribosomal protein uS2 family.

The polypeptide is Small ribosomal subunit protein uS2 (Rhodopseudomonas palustris (strain HaA2)).